We begin with the raw amino-acid sequence, 274 residues long: PTS system sorbose-specific EIID component (274 aa).

The region spanning 4–273 is the PTS EIID domain; that stretch reads KKITQGDLVS…GIIGNALGFL (270 aa). 6 consecutive transmembrane segments (helical) span residues 61–81, 99–119, 126–146, 186–206, 226–246, and 253–273; these read LVFF…TAAM, IKVG…WGTL, LGAS…FFIF, ILGL…NVPL, ILDQ…MVRL, and PVWL…LGFL.

The protein resides in the cell inner membrane. Functionally, the phosphoenolpyruvate-dependent sugar phosphotransferase system (PTS), a major carbohydrate active transport system, catalyzes the phosphorylation of incoming sugar substrates concomitant with their translocation across the cell membrane. The enzyme II SorABFM PTS system is involved in sorbose transport. This chain is PTS system sorbose-specific EIID component, found in Klebsiella pneumoniae.